An 81-amino-acid polypeptide reads, in one-letter code: MSHAVKIYDTCIGCTQCVRACPLDVLEMVPWDGHKSGQIAASPRTEDCVGCKRCETACPTDFLSIRVYLGDETTRSMGLAY.

2 consecutive 4Fe-4S ferredoxin-type domains span residues 2-31 (SHAV…MVPW) and 39-68 (IAAS…IRVY). Residues cysteine 11, cysteine 14, cysteine 17, cysteine 21, cysteine 48, cysteine 51, cysteine 54, and cysteine 58 each coordinate [4Fe-4S] cluster.

The cyanobacterial PSI reaction center is composed of one copy each of PsaA,B,C,D,E,F,I,J,K,L,M and X, and forms trimeric complexes. The cofactor is [4Fe-4S] cluster.

The protein localises to the cellular thylakoid membrane. The enzyme catalyses reduced [plastocyanin] + hnu + oxidized [2Fe-2S]-[ferredoxin] = oxidized [plastocyanin] + reduced [2Fe-2S]-[ferredoxin]. In terms of biological role, apoprotein for the two 4Fe-4S centers FA and FB of photosystem I (PSI); essential for photochemical activity. FB is the terminal electron acceptor of PSI, donating electrons to ferredoxin. The C-terminus interacts with PsaA/B/D and helps assemble the protein into the PSI complex. Required for binding of PsaD and PsaE to PSI. PSI is a plastocyanin/cytochrome c6-ferredoxin oxidoreductase, converting photonic excitation into a charge separation, which transfers an electron from the donor P700 chlorophyll pair to the spectroscopically characterized acceptors A0, A1, FX, FA and FB in turn. This chain is Photosystem I iron-sulfur center, found in Prochlorococcus marinus (strain MIT 9303).